The sequence spans 227 residues: PKHD-type hydroxylase Bamb_4192 (227 aa).

Residues 78-178 (KVFPPLFNRY…RVASFFWIQS (101 aa)) enclose the Fe2OG dioxygenase domain. 3 residues coordinate Fe cation: histidine 96, aspartate 98, and histidine 159. Arginine 169 is a binding site for 2-oxoglutarate.

Fe(2+) serves as cofactor. It depends on L-ascorbate as a cofactor.

The sequence is that of PKHD-type hydroxylase Bamb_4192 from Burkholderia ambifaria (strain ATCC BAA-244 / DSM 16087 / CCUG 44356 / LMG 19182 / AMMD) (Burkholderia cepacia (strain AMMD)).